The primary structure comprises 280 residues: Late embryogenesis abundant protein 76 (280 aa).

2 disordered regions span residues 1–156 (MASN…GEAV) and 220–241 (EEED…TDPT). Positions 28 to 39 (MRDKAEEGKDKT) are enriched in basic and acidic residues. 5 LEA 11-mer repeat repeats span residues 31–41 (KAEEGKDKTSQ), 53–63 (TAQAAKDKTSQ), 75–85 (TAQAAKDKTSQ), 97–107 (TAQAAKDKTSQ), and 119–129 (TTQSSKEKTSQ). The segment covering 40-114 (SQTAQKAQQK…TSQAAQTTQQ (75 aa)) has biased composition (low complexity). Composition is skewed to basic and acidic residues over residues 115–127 (KAHE…KEKT) and 136–145 (EKARETKDKT). Low complexity predominate over residues 230–239 (TTTCTTQSTD).

The protein belongs to the LEA type 4 family.

Its function is as follows. Lea proteins are late embryonic proteins abundant in higher plant seed embryos. The protein is Late embryogenesis abundant protein 76 of Brassica napus (Rape).